The following is an 87-amino-acid chain: Transcriptional regulator PINT87aa (87 aa).

In terms of assembly, interacts with PAF1 complex member PAF1. Interacts with transcription factor FOXM1. Expressed in brain, liver, kidney and stomach with lower levels in breast, intestine, thyroid and pancreas.

The protein resides in the nucleus. In terms of biological role, enhances the binding of the PAF1 complex to target gene promoters and plays a role in negative regulation of transcription. May function as an anchor to keep the PAF1 complex on target gene promoters, sequentially pausing RNA polymerase II-induced mRNA elongation. Inhibits FOXM1-mediated transcription of PHB2. The sequence is that of Transcriptional regulator PINT87aa from Homo sapiens (Human).